The primary structure comprises 463 residues: UDP-N-acetylmuramate--L-alanine ligase (463 aa).

Residue 112–118 (GTHGKTT) coordinates ATP.

It belongs to the MurCDEF family.

The protein localises to the cytoplasm. The enzyme catalyses UDP-N-acetyl-alpha-D-muramate + L-alanine + ATP = UDP-N-acetyl-alpha-D-muramoyl-L-alanine + ADP + phosphate + H(+). It participates in cell wall biogenesis; peptidoglycan biosynthesis. Functionally, cell wall formation. The polypeptide is UDP-N-acetylmuramate--L-alanine ligase (Thiobacillus denitrificans (strain ATCC 25259 / T1)).